The sequence spans 601 residues: NADPH--cytochrome P450 reductase (601 aa).

One can recognise a Flavodoxin-like domain in the interval 25-169 (IVVFYGSQTG…DFVTWREQFW (145 aa)). FMN is bound by residues 31–36 (SQTGTG), 83–86 (ATYG), 118–127 (LGDKTYEHYN), and Asp153. Residues 224 to 425 (KNPFLAPVTV…ICAVLVEYXT (202 aa)) form the FAD-binding FR-type domain. Residues 399-402 (RYYS), 417-419 (CAV), Tyr423, and 427-430 (GVAT) each bind FAD. Residues Thr458, 519-520 (SR), 525-529 (KVYVQ), and Asp562 each bind NADP(+). An FAD-binding site is contributed by Trp600.

It belongs to the NADPH--cytochrome P450 reductase family. The protein in the N-terminal section; belongs to the flavodoxin family. This sequence in the C-terminal section; belongs to the flavoprotein pyridine nucleotide cytochrome reductase family. FAD is required as a cofactor. Requires FMN as cofactor.

It is found in the endoplasmic reticulum membrane. The enzyme catalyses 2 oxidized [cytochrome P450] + NADPH = 2 reduced [cytochrome P450] + NADP(+) + H(+). Functionally, this enzyme is required for electron transfer from NADP to cytochrome P450 in microsomes. It can also provide electron transfer to heme oxygenase and cytochrome B5. The polypeptide is NADPH--cytochrome P450 reductase (Salmo trutta (Brown trout)).